The primary structure comprises 328 residues: Cytochrome c biogenesis protein CcsA (328 aa).

Helical transmembrane passes span 13–33, 46–66, 73–93, 101–121, 146–166, 234–254, 263–283, and 295–315; these read ISFS…LVNL, GIVI…IYSG, LYES…VSYF, LNAI…SGLL, MILG…LLVI, IISL…VWAN, WDPK…YLHI, and AIVA…VNLL.

It belongs to the CcmF/CycK/Ccl1/NrfE/CcsA family. May interact with Ccs1.

Its subcellular location is the plastid. It is found in the chloroplast thylakoid membrane. Required during biogenesis of c-type cytochromes (cytochrome c6 and cytochrome f) at the step of heme attachment. The polypeptide is Cytochrome c biogenesis protein CcsA (Nasturtium officinale (Watercress)).